An 871-amino-acid chain; its full sequence is Valine--tRNA ligase (871 aa).

The short motif at 47-57 (PNVTGRLHIGH) is the 'HIGH' region element. The 'KMSKS' region signature appears at 534–538 (KMSKS). Lys-537 is a binding site for ATP. The stretch at 805-871 (DLTPILNRLN…IEEELARLTR (67 aa)) forms a coiled coil.

It belongs to the class-I aminoacyl-tRNA synthetase family. ValS type 1 subfamily. As to quaternary structure, monomer.

The protein resides in the cytoplasm. The enzyme catalyses tRNA(Val) + L-valine + ATP = L-valyl-tRNA(Val) + AMP + diphosphate. In terms of biological role, catalyzes the attachment of valine to tRNA(Val). As ValRS can inadvertently accommodate and process structurally similar amino acids such as threonine, to avoid such errors, it has a 'posttransfer' editing activity that hydrolyzes mischarged Thr-tRNA(Val) in a tRNA-dependent manner. This chain is Valine--tRNA ligase, found in Nitratiruptor sp. (strain SB155-2).